An 80-amino-acid chain; its full sequence is Consomatin Mrc1 (80 aa).

A signal peptide spans 1-22 (MQTAYWVMVMMMVWITAPLSEG). Residues 23–57 (GKLNDVIRGLVPDDVTPQLILRSLISRRPSDSVVR) constitute a propeptide that is removed on maturation. An intrachain disulfide couples cysteine 63 to cysteine 68. Tryptophan 65 bears the D-tryptophan mark. 4 positions are modified to 4-hydroxyproline: proline 69, proline 70, proline 71, and proline 72. The propeptide occupies 74 to 80 (RRPNGKG).

Belongs to the conotoxin C superfamily. Consomatin family. As to expression, expressed by the venom duct.

The protein localises to the secreted. In terms of biological role, moderately activates human somatostatin receptors (SSTR) with a preferential activation of SSTR1 and SSTR4. In vivo, does not cause behavioral changes in mice within a few minutes of intracranial injection, but causes a progressive loss of movement thereafter. Four to five hours after injection, mice recover, even with the highest dose tested. Shows antinociception and antihyperalgesia activities in two mouse models of acute pain, most probably by acting outside the central nervous system. In Conus mercator (Trader cone), this protein is Consomatin Mrc1.